Reading from the N-terminus, the 267-residue chain is Non-homologous end joining protein Ku (267 aa).

One can recognise a Ku domain in the interval Ile-10–Leu-190.

This sequence belongs to the prokaryotic Ku family. As to quaternary structure, homodimer. Interacts with LigD.

Functionally, with LigD forms a non-homologous end joining (NHEJ) DNA repair enzyme, which repairs dsDNA breaks with reduced fidelity. Binds linear dsDNA with 5'- and 3'- overhangs but not closed circular dsDNA nor ssDNA. Recruits and stimulates the ligase activity of LigD. The chain is Non-homologous end joining protein Ku from Solibacter usitatus (strain Ellin6076).